The following is a 287-amino-acid chain: Phosphatidylglycerol--prolipoprotein diacylglyceryl transferase (287 aa).

A run of 4 helical transmembrane segments spans residues 26–46 (VAIR…WWLA), 71–91 (FLVW…ILFY), 106–126 (IWRG…AMIV), and 132–152 (GLPV…GLFF). R154 lines the a 1,2-diacyl-sn-glycero-3-phospho-(1'-sn-glycerol) pocket. The next 3 membrane-spanning stretches (helical) occupy residues 187-207 (SQLY…QVLA), 217-237 (GVIS…VEFF), and 251-271 (WLTM…WAIW).

It belongs to the Lgt family.

It is found in the cell inner membrane. It catalyses the reaction L-cysteinyl-[prolipoprotein] + a 1,2-diacyl-sn-glycero-3-phospho-(1'-sn-glycerol) = an S-1,2-diacyl-sn-glyceryl-L-cysteinyl-[prolipoprotein] + sn-glycerol 1-phosphate + H(+). It participates in protein modification; lipoprotein biosynthesis (diacylglyceryl transfer). Its function is as follows. Catalyzes the transfer of the diacylglyceryl group from phosphatidylglycerol to the sulfhydryl group of the N-terminal cysteine of a prolipoprotein, the first step in the formation of mature lipoproteins. This is Phosphatidylglycerol--prolipoprotein diacylglyceryl transferase from Allorhizobium ampelinum (strain ATCC BAA-846 / DSM 112012 / S4) (Agrobacterium vitis (strain S4)).